The sequence spans 138 residues: rRNA methyltransferase 1, mitochondrial (138 aa).

The N-terminal 21 residues, 1-21 (MNNQPCSIVWRRFLTSKVKPA), are a transit peptide targeting the mitochondrion. Positions 92–113 (KQDILSSKRQQEEHKSKYSRKS) are disordered.

The protein belongs to the class IV-like SAM-binding methyltransferase superfamily. RNA methyltransferase TrmH family.

It is found in the mitochondrion. It catalyses the reaction a guanosine in 21S rRNA + S-adenosyl-L-methionine = a 2'-O-methylguanosine in 21S rRNA + S-adenosyl-L-homocysteine + H(+). S-adenosyl-L-methionine-dependent 2'-O-ribose methyltransferase that catalyzes the formation of the 2'-O-methylguanosine corresponding to position 2270 in S.cerevisiae 21S mitochondrial large ribosomal RNA, a universally conserved modification in the peptidyl transferase domain of the 21S rRNA. The chain is rRNA methyltransferase 1, mitochondrial from Lachancea kluyveri (strain ATCC 58438 / CBS 3082 / BCRC 21498 / NBRC 1685 / JCM 7257 / NCYC 543 / NRRL Y-12651) (Yeast).